Reading from the N-terminus, the 294-residue chain is Large ribosomal subunit protein uL2 (294 aa).

2 disordered regions span residues 1 to 37 (MGIRTFRPYTPSTRHMTVSNFEELSRDENGKRPRPEK) and 228 to 294 (GSVM…RAAQ). Positions 10–22 (TPSTRHMTVSNFE) are enriched in polar residues. Positions 23-37 (ELSRDENGKRPRPEK) are enriched in basic and acidic residues. The segment covering 264–285 (KTRKRNKPSNKFIVRGRRRGGR) has biased composition (basic residues).

It belongs to the universal ribosomal protein uL2 family. Part of the 50S ribosomal subunit. Forms a bridge to the 30S subunit in the 70S ribosome.

Its function is as follows. One of the primary rRNA binding proteins. Required for association of the 30S and 50S subunits to form the 70S ribosome, for tRNA binding and peptide bond formation. It has been suggested to have peptidyltransferase activity; this is somewhat controversial. Makes several contacts with the 16S rRNA in the 70S ribosome. The protein is Large ribosomal subunit protein uL2 of Synechococcus sp. (strain JA-3-3Ab) (Cyanobacteria bacterium Yellowstone A-Prime).